The following is a 369-amino-acid chain: Phosphoribosyl pyrophosphate synthase-associated protein 2 (369 aa).

Met1 is subject to N-acetylmethionine. 3 positions are modified to phosphoserine: Ser219, Ser227, and Ser233.

The protein belongs to the ribose-phosphate pyrophosphokinase family. As to quaternary structure, binds to PRPS1 and PRPS2. As to expression, ubiquitous.

Its function is as follows. Seems to play a negative regulatory role in 5-phosphoribose 1-diphosphate synthesis. The chain is Phosphoribosyl pyrophosphate synthase-associated protein 2 (Prpsap2) from Rattus norvegicus (Rat).